The primary structure comprises 282 residues: NADPH-dependent 7-cyano-7-deazaguanine reductase (282 aa).

88 to 90 serves as a coordination point for substrate; sequence IES. 90–91 provides a ligand contact to NADPH; it reads SK. The active-site Thioimide intermediate is Cys190. Residue Asp197 is the Proton donor of the active site. 229–230 is a binding site for substrate; it reads HE. 258–259 is an NADPH binding site; it reads RG.

It belongs to the GTP cyclohydrolase I family. QueF type 2 subfamily. As to quaternary structure, homodimer.

Its subcellular location is the cytoplasm. The enzyme catalyses 7-aminomethyl-7-carbaguanine + 2 NADP(+) = 7-cyano-7-deazaguanine + 2 NADPH + 3 H(+). The protein operates within tRNA modification; tRNA-queuosine biosynthesis. Functionally, catalyzes the NADPH-dependent reduction of 7-cyano-7-deazaguanine (preQ0) to 7-aminomethyl-7-deazaguanine (preQ1). The chain is NADPH-dependent 7-cyano-7-deazaguanine reductase from Salmonella paratyphi A (strain ATCC 9150 / SARB42).